We begin with the raw amino-acid sequence, 255 residues long: Complement C1q-like protein 3 (255 aa).

The signal sequence occupies residues 1 to 20 (MVLLLVILIPVLVSSAGTSA). Positions 39 to 109 (KAPSTAATPD…GLPGPPGAPG (71 aa)) are disordered. In terms of domain architecture, Collagen-like spans 61 to 111 (GPKGEAGRPGKAGPRGPPGEPGPPGPMGPPGEKGEPGRQGLPGPPGAPGLN). The segment covering 75–89 (RGPPGEPGPPGPMGP) has biased composition (pro residues). Residues 122–255 (STVPKIAFYA…TFSGFIIYAD (134 aa)) form the C1q domain.

In terms of assembly, forms homooligomers. Interacts with ADGRB3. Interacts with C1QL2 and C1QL4, when proteins are coexpressed; this interaction does not occur after secretion. In terms of tissue distribution, highly expressed in adipose tissue, with expression levels at least 2 orders of magnitude higher than in other tissues, including brain and kidney.

Its subcellular location is the secreted. Functionally, may regulate the number of excitatory synapses that are formed on hippocampus neurons. Has no effect on inhibitory synapses. Plays a role in glucose homeostasis. Via AMPK signaling pathway, stimulates glucose uptake in adipocytes, myotubes and hepatocytes and enhances insulin-stimulated glucose uptake. In a hepatoma cell line, reduces the expression of gluconeogenic enzymes G6PC1 and PCK1 and hence decreases de novo glucose production. The sequence is that of Complement C1q-like protein 3 (C1QL3) from Homo sapiens (Human).